The chain runs to 204 residues: Holliday junction branch migration complex subunit RuvA (204 aa).

Residues 1–67 (MIAFLSGHLV…ETELVLYGFG (67 aa)) form a domain I region. Residues 68–146 (SPAERDVFVE…HWRQGLENAD (79 aa)) form a domain II region. The tract at residues 147-156 (RPLAGGPPPA) is flexible linker. Positions 156–204 (AIREEVEMALLALGYSLQEIQAALQALPSQPRPTEEWLRDAITYLSRQP) are domain III.

The protein belongs to the RuvA family. In terms of assembly, homotetramer. Forms an RuvA(8)-RuvB(12)-Holliday junction (HJ) complex. HJ DNA is sandwiched between 2 RuvA tetramers; dsDNA enters through RuvA and exits via RuvB. An RuvB hexamer assembles on each DNA strand where it exits the tetramer. Each RuvB hexamer is contacted by two RuvA subunits (via domain III) on 2 adjacent RuvB subunits; this complex drives branch migration. In the full resolvosome a probable DNA-RuvA(4)-RuvB(12)-RuvC(2) complex forms which resolves the HJ.

It localises to the cytoplasm. The RuvA-RuvB-RuvC complex processes Holliday junction (HJ) DNA during genetic recombination and DNA repair, while the RuvA-RuvB complex plays an important role in the rescue of blocked DNA replication forks via replication fork reversal (RFR). RuvA specifically binds to HJ cruciform DNA, conferring on it an open structure. The RuvB hexamer acts as an ATP-dependent pump, pulling dsDNA into and through the RuvAB complex. HJ branch migration allows RuvC to scan DNA until it finds its consensus sequence, where it cleaves and resolves the cruciform DNA. The protein is Holliday junction branch migration complex subunit RuvA of Synechococcus sp. (strain JA-3-3Ab) (Cyanobacteria bacterium Yellowstone A-Prime).